A 577-amino-acid chain; its full sequence is MRMKDLYAPTLKETPSDVETVSHEYLLRGGFIRKTAAGIYTYLPLGRRVLLKIENIVREEMNRIGAQEILMPILQPAELWKQSGRWDDYGPEMMKLKDRHERDFTLGPTHEEIVTDLVKNELRSYRQLPLVVYQVANKYRDEIRPRFGLLRAREFIMKDAYSFHSSWESLDETYELFKEAYSRIMERLGVKYMVIEAETGAIGGNASHEFVVPAKIGETNVLFCEKCGYQASDEKAEYKGEYTQEQEEEKPFKKVPTPGVKTIEEVSEFLGVPPSKIVKSLLYKGREGYVMVLIRGDLELNEAKLKAHLKDQSLRMATPEEILKDFGVPVGFIGPIGVDVKKVADHSVRGLKNFVVGGMEEDTHYVNANHPRDFKVDEWYDLRTMVEGDPCPVCGEPLKATKGIELGHIFKLGTKYSEAMKAYFMDENGEMKPFIMGCYGWGVSRTMAAVVEHFHDENGMIWPLSIAPYTVVVDILNMNDAEQKQVGEKIYQVLSEKGEEVVLDDREVSPGFKFKDADLIGFPIRINVGRSLKEGVVELKKRYSKELVKVNIKNGFGTLLETLEKMKREYDPKEAAR.

The protein belongs to the class-II aminoacyl-tRNA synthetase family. ProS type 1 subfamily. As to quaternary structure, homodimer.

It localises to the cytoplasm. The catalysed reaction is tRNA(Pro) + L-proline + ATP = L-prolyl-tRNA(Pro) + AMP + diphosphate. In terms of biological role, catalyzes the attachment of proline to tRNA(Pro) in a two-step reaction: proline is first activated by ATP to form Pro-AMP and then transferred to the acceptor end of tRNA(Pro). As ProRS can inadvertently accommodate and process non-cognate amino acids such as alanine and cysteine, to avoid such errors it has two additional distinct editing activities against alanine. One activity is designated as 'pretransfer' editing and involves the tRNA(Pro)-independent hydrolysis of activated Ala-AMP. The other activity is designated 'posttransfer' editing and involves deacylation of mischarged Ala-tRNA(Pro). The misacylated Cys-tRNA(Pro) is not edited by ProRS. The chain is Proline--tRNA ligase from Thermotoga sp. (strain RQ2).